The primary structure comprises 222 residues: Guanylate kinase (222 aa).

In terms of domain architecture, Guanylate kinase-like spans 19 to 197; the sequence is GFLFILSSPS…SVSLIKSIYL (179 aa). 26 to 33 contributes to the ATP binding site; it reads SPSGAGKS.

Belongs to the guanylate kinase family.

Its subcellular location is the cytoplasm. The catalysed reaction is GMP + ATP = GDP + ADP. In terms of biological role, essential for recycling GMP and indirectly, cGMP. The polypeptide is Guanylate kinase (Bartonella henselae (strain ATCC 49882 / DSM 28221 / CCUG 30454 / Houston 1) (Rochalimaea henselae)).